Reading from the N-terminus, the 131-residue chain is Small ribosomal subunit protein uS11 (131 aa).

The protein belongs to the universal ribosomal protein uS11 family. Part of the 30S ribosomal subunit. Interacts with proteins S7 and S18. Binds to IF-3.

Functionally, located on the platform of the 30S subunit, it bridges several disparate RNA helices of the 16S rRNA. Forms part of the Shine-Dalgarno cleft in the 70S ribosome. This chain is Small ribosomal subunit protein uS11, found in Helicobacter pylori (strain Shi470).